The following is a 147-amino-acid chain: Hemoglobin subunit gamma-2 (147 aa).

The 145-residue stretch at 3 to 147 folds into the Globin domain; sequence HFTEEDKATI…VASALSSRYH (145 aa). At threonine 13 the chain carries Phosphothreonine. Phosphoserine occurs at positions 45, 51, and 53. At lysine 60 the chain carries N6-acetyllysine. Residue histidine 64 participates in heme b binding. N6-acetyllysine is present on lysine 83. Position 93 (histidine 93) interacts with heme b. S-nitrosocysteine is present on cysteine 94. Residues serine 140, serine 143, and serine 144 each carry the phosphoserine modification.

This sequence belongs to the globin family. Heterotetramer of two alpha chains and two gamma chains in fetal hemoglobin (Hb F). As to expression, red blood cells.

Gamma chains make up the fetal hemoglobin F, in combination with alpha chains. The polypeptide is Hemoglobin subunit gamma-2 (HBG2) (Hylobates lar (Lar gibbon)).